A 104-amino-acid chain; its full sequence is Fusaric acid biosynthesis protein 2 (104 aa).

This sequence belongs to the YciI family.

It functions in the pathway mycotoxin biosynthesis. Part of the gene cluster that mediates the biosynthesis of fusaric acid, a mycotoxin with low to moderate toxicity to animals and humans, but with high phytotoxic properties. L-aspartate is suggested as fusaric acid amino acid precursor that is activated and further processed to O-acetyl-L-homoserine by cluster enzymes aspartate kinase FUB3 and homoserine O-acetyltransferase FUB5, as well as enzymes of the primary metabolism. The polyketide synthase (PKS) FUB1 generates the triketide trans-2-hexenal which is presumptively released by the hydrolase FUB4 and linked to the NRPS-bound amino acid precursor by NAD(P)-dependent dehydrogenase FUB6. FUB1, FUB4, and the non-canonical NRPS Fub8 may form an enzyme complex. Further processing of the NRPS-bound intermediate might be carried out by FUB6 and the sulfhydrylase FUB7, enabling a spontaneous electrocyclization to close the carbon backbone of fusaric acid. Dihydrofusaric acid is likely to be released via reduction by the thioester reductase (TR) domain of FUB8 whereupon the final oxidation to fusaric acid may (also) be performed by the FMN-dependent dehydrogenase FUB9. The protein is Fusaric acid biosynthesis protein 2 of Gibberella fujikuroi (strain CBS 195.34 / IMI 58289 / NRRL A-6831) (Bakanae and foot rot disease fungus).